The following is a 198-amino-acid chain: MAPACLLAPLLLLLLGGFPLVPGESIRETEVIDPQDLLEGRYFSGALPDDEDAGGSDDFELSGSGDLDDTEEPRPFPEVIEPLVPLDNHIPENAQPGIRVPSEPKELEENEVIPKRAPSDVGDDMSNKVSMSSTAQGSNIFERTEVLAALIVGGVVGILFAVFLILLLVYRMKKKDEGSYDLGKKPIYKKAPTNEFYA.

Positions 1–23 (MAPACLLAPLLLLLLGGFPLVPG) are cleaved as a signal peptide. Residues 24-145 (ESIRETEVID…QGSNIFERTE (122 aa)) lie on the Extracellular side of the membrane. Disordered stretches follow at residues 42-76 (YFSG…PRPF) and 94-130 (AQPG…NKVS). S44, S62, and S64 each carry an O-linked (Xyl...) (glycosaminoglycan) serine glycan. Residues 48–71 (PDDEDAGGSDDFELSGSGDLDDTE) show a composition bias toward acidic residues. Basic and acidic residues predominate over residues 102-118 (SEPKELEENEVIPKRAP). A helical membrane pass occupies residues 146–170 (VLAALIVGGVVGILFAVFLILLLVY). Residues 171 to 198 (RMKKKDEGSYDLGKKPIYKKAPTNEFYA) lie on the Cytoplasmic side of the membrane.

This sequence belongs to the syndecan proteoglycan family. In terms of assembly, homodimer. Interacts with CDCP1 and SDCBP. Interacts (via its cytoplasmic domain) with GIPC (via its PDZ domain). Interacts (via its cytoplasmic domain) with NUDT16L1. Interacts with DNM2; this interaction is markedly enhanced at focal ahesion site upon induction of focal adhesions and stress-fiber formation. Post-translationally, shedding is enhanced by a number of factors such as heparanase, thrombin or EGF. Also by stress and wound healing. PMA-mediated shedding is inhibited by TIMP3. O-glycosylated; contains both chondroitin sulfate and heparan sulfate. Ser-44, Ser-62 and Ser-64 can all be modified by either chondroitin sulfate or heparan sulfate, and the protein exists in forms that contain only chondroitin sulfate, only heparan sulfate and both chondroitin sulfate and heparan sulfate. As to expression, ubiquitous. Highest levels in liver, kidney and lung.

Its subcellular location is the membrane. The protein localises to the secreted. In terms of biological role, cell surface proteoglycan which regulates exosome biogenesis in concert with SDCBP and PDCD6IP. This Mus musculus (Mouse) protein is Syndecan-4.